We begin with the raw amino-acid sequence, 187 residues long: Potassium-transporting ATPase KdpC subunit (187 aa).

A helical membrane pass occupies residues 10–30 (LVAATMLICVAGYSAAVWAVG).

The protein belongs to the KdpC family. In terms of assembly, the system is composed of three essential subunits: KdpA, KdpB and KdpC.

It localises to the cell inner membrane. In terms of biological role, part of the high-affinity ATP-driven potassium transport (or Kdp) system, which catalyzes the hydrolysis of ATP coupled with the electrogenic transport of potassium into the cytoplasm. This subunit acts as a catalytic chaperone that increases the ATP-binding affinity of the ATP-hydrolyzing subunit KdpB by the formation of a transient KdpB/KdpC/ATP ternary complex. This chain is Potassium-transporting ATPase KdpC subunit, found in Parvibaculum lavamentivorans (strain DS-1 / DSM 13023 / NCIMB 13966).